A 159-amino-acid chain; its full sequence is 17 kDa surface antigen (159 aa).

Residues 1–19 (MKLLSKIMIIALATSMLQA) form the signal peptide. Residue Cys-20 is the site of N-palmitoyl cysteine attachment. The S-diacylglycerol cysteine moiety is linked to residue Cys-20.

It belongs to the rickettsiale 17 kDa surface antigen family.

The protein localises to the cell outer membrane. This chain is 17 kDa surface antigen (omp), found in Rickettsia conorii (strain ATCC VR-613 / Malish 7).